The chain runs to 1311 residues: Nephrocystin-3 (1311 aa).

Residues 81–183 (SKNNEIASMQ…LQRLQAQGIQ (103 aa)) are a coiled coil. TPR repeat units follow at residues 889 to 923 (LSYWQLVGKDKISMASEYFDALKQYERSCEGEEKM), 927 to 960 (ADLYETLGRFLKDLGLLSQAVTPLQRSLEIRETA), 969 to 1002 (AQSLHQLAGVYVQSKKFGNAEQLYKQALEISENA), 1011 to 1044 (ARELDALAVLYQKQNKFEQAEQLRKKSLKIRQKS), 1077 to 1110 (ARTLNELGVLYYLQNNLETAETFLKRSLEMRERV), 1119 to 1152 (AQSINNLAALYNEKKQYDKAEELYERALDIRRRA), 1161 to 1194 (AYTVKHLAVLYKRKGKLDKAVPLYELAVEIRQKS), 1203 to 1236 (ATALVNLAVLYCQMKKQAEASPLYERAMKIYEDS), and 1245 to 1278 (GETLKNLAVLRYEEGDFEKAAELYKRAMEIKETE).

The protein resides in the cell projection. It is found in the cilium. In terms of biological role, required for normal ciliary development and function. Inhibits disheveled-1-induced canonical Wnt-signaling activity and may also play a role in the control of non-canonical Wnt signaling that regulates planar cell polarity. Probably acts as a molecular switch between different Wnt signaling pathways. Required for proper convergent extension cell movements. This chain is Nephrocystin-3 (nphp3), found in Xenopus tropicalis (Western clawed frog).